The primary structure comprises 121 residues: Large ribosomal subunit protein bL20 (121 aa).

The protein belongs to the bacterial ribosomal protein bL20 family.

Its function is as follows. Binds directly to 23S ribosomal RNA and is necessary for the in vitro assembly process of the 50S ribosomal subunit. It is not involved in the protein synthesizing functions of that subunit. This is Large ribosomal subunit protein bL20 from Dinoroseobacter shibae (strain DSM 16493 / NCIMB 14021 / DFL 12).